The primary structure comprises 47 residues: Protein RL9A (47 aa).

The helical transmembrane segment at 27–47 (CMIIVIMIAISIWILTYVLFL) threads the bilayer.

The protein localises to the host membrane. The polypeptide is Protein RL9A (RL9A) (Human cytomegalovirus (strain Merlin) (HHV-5)).